The chain runs to 218 residues: MPTRSPSVVISDDEPGYDLDLFCIPNHYAEDLEKVFIPHGLIMDRTERLARDVMKEMGGHHIVALCVLKGGYKFFADLLDYIKALNRNSDRSIPMTVDFIRLKSYCNDQSTGDIKVIGGDDLSTLTGKNVLIVEDIIDTGKTMQTLLSLVKQYSPKMVKVASLLVKRTSRSVGYRPDFVGFEIPDKFVVGYALDYNEYFRDLNHVCVISETGKAKYKA.

Residue Lys-69 participates in GMP binding. Lys-103 carries the N6-acetyllysine modification. A Glycyl lysine isopeptide (Lys-Gly) (interchain with G-Cter in SUMO1); alternate cross-link involves residue Lys-115. Residue Lys-115 forms a Glycyl lysine isopeptide (Lys-Gly) (interchain with G-Cter in SUMO2); alternate linkage. GMP is bound by residues 134–142, Lys-166, 186–188, and Asp-194; these read EDIIDTGKT and KFV. Catalysis depends on Asp-138, which acts as the Proton acceptor. Thr-142 is modified (phosphothreonine). Asp-194 is a binding site for Mg(2+).

This sequence belongs to the purine/pyrimidine phosphoribosyltransferase family. Homotetramer. Mg(2+) is required as a cofactor.

It localises to the cytoplasm. The enzyme catalyses IMP + diphosphate = hypoxanthine + 5-phospho-alpha-D-ribose 1-diphosphate. The catalysed reaction is GMP + diphosphate = guanine + 5-phospho-alpha-D-ribose 1-diphosphate. Its pathway is purine metabolism; IMP biosynthesis via salvage pathway; IMP from hypoxanthine: step 1/1. Converts guanine to guanosine monophosphate, and hypoxanthine to inosine monophosphate. Transfers the 5-phosphoribosyl group from 5-phosphoribosylpyrophosphate onto the purine. Plays a central role in the generation of purine nucleotides through the purine salvage pathway. This chain is Hypoxanthine-guanine phosphoribosyltransferase (Hprt1), found in Mus musculus (Mouse).